Reading from the N-terminus, the 130-residue chain is Anti-adapter protein IraD (130 aa).

This sequence belongs to the GpW/Gp25 family. IraD subfamily. In terms of assembly, interacts with RssB.

The protein resides in the cytoplasm. Functionally, inhibits RpoS proteolysis by regulating RssB activity, thereby increasing the stability of the sigma stress factor RpoS during oxidative stress. Its effect on RpoS stability is due to its interaction with RssB, which probably blocks the interaction of RssB with RpoS, and the consequent delivery of the RssB-RpoS complex to the ClpXP protein degradation pathway. This is Anti-adapter protein IraD from Escherichia coli (strain K12 / MC4100 / BW2952).